A 37-amino-acid chain; its full sequence is Large ribosomal subunit protein bL36c (37 aa).

The protein belongs to the bacterial ribosomal protein bL36 family.

The protein resides in the plastid. It localises to the chloroplast. This chain is Large ribosomal subunit protein bL36c (rpl36), found in Porphyra purpurea (Red seaweed).